Reading from the N-terminus, the 74-residue chain is Conotoxin AbVII (74 aa).

The N-terminal stretch at 1-17 (VLIIAVLFLTACQLTTA) is a signal peptide. The propeptide occupies 18–40 (ETSSRGKQKHRALRSTDKNSRMT). Residues 19–41 (TSSRGKQKHRALRSTDKNSRMTK) form a disordered region. Disulfide bonds link C43–C57, C50–C61, and C56–C68.

This sequence belongs to the conotoxin O1 superfamily. Expressed by the venom duct.

It localises to the secreted. This chain is Conotoxin AbVII, found in Conus abbreviatus (Abbreviated cone).